The chain runs to 268 residues: Ribosomal RNA small subunit methyltransferase A (268 aa).

S-adenosyl-L-methionine is bound by residues Asn-18, Leu-20, Gly-45, Glu-66, Asp-91, and Asn-112.

This sequence belongs to the class I-like SAM-binding methyltransferase superfamily. rRNA adenine N(6)-methyltransferase family. RsmA subfamily.

The protein localises to the cytoplasm. It carries out the reaction adenosine(1518)/adenosine(1519) in 16S rRNA + 4 S-adenosyl-L-methionine = N(6)-dimethyladenosine(1518)/N(6)-dimethyladenosine(1519) in 16S rRNA + 4 S-adenosyl-L-homocysteine + 4 H(+). Functionally, specifically dimethylates two adjacent adenosines (A1518 and A1519) in the loop of a conserved hairpin near the 3'-end of 16S rRNA in the 30S particle. May play a critical role in biogenesis of 30S subunits. The sequence is that of Ribosomal RNA small subunit methyltransferase A from Shewanella putrefaciens (strain CN-32 / ATCC BAA-453).